Here is a 347-residue protein sequence, read N- to C-terminus: UDP-N-acetylenolpyruvoylglucosamine reductase (347 aa).

Positions 16–187 (AIEQCSHYLV…IAVGLKLPKT (172 aa)) constitute an FAD-binding PCMH-type domain. Arginine 163 is an active-site residue. Serine 233 (proton donor) is an active-site residue. Glutamate 328 is an active-site residue.

The protein belongs to the MurB family. FAD is required as a cofactor.

The protein localises to the cytoplasm. It carries out the reaction UDP-N-acetyl-alpha-D-muramate + NADP(+) = UDP-N-acetyl-3-O-(1-carboxyvinyl)-alpha-D-glucosamine + NADPH + H(+). The protein operates within cell wall biogenesis; peptidoglycan biosynthesis. Functionally, cell wall formation. This Vibrio vulnificus (strain YJ016) protein is UDP-N-acetylenolpyruvoylglucosamine reductase.